The primary structure comprises 238 residues: CFA/I fimbrial subunit A (238 aa).

Positions M1 to A19 are cleaved as a signal peptide.

The protein localises to the fimbrium. In terms of biological role, might function as a shuttle protein in the transport of fimbria through the periplasmic space or might function as an adhesin. This Escherichia coli protein is CFA/I fimbrial subunit A (cfaA).